The primary structure comprises 275 residues: Large ribosomal subunit protein uL2 (275 aa).

Residues Val-223–Lys-275 form a disordered region.

It belongs to the universal ribosomal protein uL2 family. Part of the 50S ribosomal subunit. Forms a bridge to the 30S subunit in the 70S ribosome.

Its function is as follows. One of the primary rRNA binding proteins. Required for association of the 30S and 50S subunits to form the 70S ribosome, for tRNA binding and peptide bond formation. It has been suggested to have peptidyltransferase activity; this is somewhat controversial. Makes several contacts with the 16S rRNA in the 70S ribosome. This is Large ribosomal subunit protein uL2 from Shewanella loihica (strain ATCC BAA-1088 / PV-4).